The sequence spans 368 residues: 4-hydroxy-3-methylbut-2-en-1-yl diphosphate synthase (flavodoxin) (368 aa).

Residues C271, C274, C306, and E313 each contribute to the [4Fe-4S] cluster site.

It belongs to the IspG family. The cofactor is [4Fe-4S] cluster.

It carries out the reaction (2E)-4-hydroxy-3-methylbut-2-enyl diphosphate + oxidized [flavodoxin] + H2O + 2 H(+) = 2-C-methyl-D-erythritol 2,4-cyclic diphosphate + reduced [flavodoxin]. Its pathway is isoprenoid biosynthesis; isopentenyl diphosphate biosynthesis via DXP pathway; isopentenyl diphosphate from 1-deoxy-D-xylulose 5-phosphate: step 5/6. Converts 2C-methyl-D-erythritol 2,4-cyclodiphosphate (ME-2,4cPP) into 1-hydroxy-2-methyl-2-(E)-butenyl 4-diphosphate. In Haemophilus influenzae (strain 86-028NP), this protein is 4-hydroxy-3-methylbut-2-en-1-yl diphosphate synthase (flavodoxin).